Consider the following 363-residue polypeptide: NAD(P)H-quinone oxidoreductase subunit 1, chloroplastic (363 aa).

The next 6 helical transmembrane spans lie at 27-47 (VWLL…VLVI), 104-124 (IAVI…HLVL), 127-147 (LSIG…GLLM), 248-268 (YSGI…LVSS), 300-320 (VFGM…FLFI), and 343-363 (FLLP…LFSL).

It belongs to the complex I subunit 1 family. In terms of assembly, NDH is composed of at least 16 different subunits, 5 of which are encoded in the nucleus.

The protein localises to the plastid. It localises to the chloroplast thylakoid membrane. It carries out the reaction a plastoquinone + NADH + (n+1) H(+)(in) = a plastoquinol + NAD(+) + n H(+)(out). The enzyme catalyses a plastoquinone + NADPH + (n+1) H(+)(in) = a plastoquinol + NADP(+) + n H(+)(out). Functionally, NDH shuttles electrons from NAD(P)H:plastoquinone, via FMN and iron-sulfur (Fe-S) centers, to quinones in the photosynthetic chain and possibly in a chloroplast respiratory chain. The immediate electron acceptor for the enzyme in this species is believed to be plastoquinone. Couples the redox reaction to proton translocation, and thus conserves the redox energy in a proton gradient. The chain is NAD(P)H-quinone oxidoreductase subunit 1, chloroplastic from Ranunculus macranthus (Large buttercup).